Consider the following 333-residue polypeptide: Holliday junction branch migration complex subunit RuvB (333 aa).

Residues 1-182 form a large ATPase domain (RuvB-L) region; sequence MTNRILDMEQ…FGITGHMEYY (182 aa). Residues Leu21, Arg22, Gly63, Lys66, Thr67, Thr68, 129–131, Arg172, Tyr182, and Arg219 contribute to the ATP site; that span reads EDF. A Mg(2+)-binding site is contributed by Thr67. The segment at 183–253 is small ATPAse domain (RuvB-S); the sequence is ELADLTEIVE…ITDKALTMLD (71 aa). Residues 256–333 form a head domain (RuvB-H) region; it reads REGLDYVDQK…EHLGYPYTEK (78 aa). Residues Arg292, Arg311, Arg313, and Arg316 each coordinate DNA.

This sequence belongs to the RuvB family. In terms of assembly, homohexamer. Forms an RuvA(8)-RuvB(12)-Holliday junction (HJ) complex. HJ DNA is sandwiched between 2 RuvA tetramers; dsDNA enters through RuvA and exits via RuvB. An RuvB hexamer assembles on each DNA strand where it exits the tetramer. Each RuvB hexamer is contacted by two RuvA subunits (via domain III) on 2 adjacent RuvB subunits; this complex drives branch migration. In the full resolvosome a probable DNA-RuvA(4)-RuvB(12)-RuvC(2) complex forms which resolves the HJ.

It localises to the cytoplasm. The catalysed reaction is ATP + H2O = ADP + phosphate + H(+). The RuvA-RuvB-RuvC complex processes Holliday junction (HJ) DNA during genetic recombination and DNA repair, while the RuvA-RuvB complex plays an important role in the rescue of blocked DNA replication forks via replication fork reversal (RFR). RuvA specifically binds to HJ cruciform DNA, conferring on it an open structure. The RuvB hexamer acts as an ATP-dependent pump, pulling dsDNA into and through the RuvAB complex. RuvB forms 2 homohexamers on either side of HJ DNA bound by 1 or 2 RuvA tetramers; 4 subunits per hexamer contact DNA at a time. Coordinated motions by a converter formed by DNA-disengaged RuvB subunits stimulates ATP hydrolysis and nucleotide exchange. Immobilization of the converter enables RuvB to convert the ATP-contained energy into a lever motion, pulling 2 nucleotides of DNA out of the RuvA tetramer per ATP hydrolyzed, thus driving DNA branch migration. The RuvB motors rotate together with the DNA substrate, which together with the progressing nucleotide cycle form the mechanistic basis for DNA recombination by continuous HJ branch migration. Branch migration allows RuvC to scan DNA until it finds its consensus sequence, where it cleaves and resolves cruciform DNA. The chain is Holliday junction branch migration complex subunit RuvB from Streptococcus suis (strain 98HAH33).